The primary structure comprises 22 residues: ALPKKLKYLNLFNDGFNYMGVV.

In terms of biological role, major component of a prophage tail tube. Antibacterial activity against Gram-negative bacterium E.amylovora. This is Bacteriocin serracin-P 23 kDa subunit from Serratia plymuthica.